Reading from the N-terminus, the 187-residue chain is Ribosome-recycling factor (187 aa).

The protein belongs to the RRF family.

Its subcellular location is the cytoplasm. In terms of biological role, responsible for the release of ribosomes from messenger RNA at the termination of protein biosynthesis. May increase the efficiency of translation by recycling ribosomes from one round of translation to another. This is Ribosome-recycling factor from Ruegeria pomeroyi (strain ATCC 700808 / DSM 15171 / DSS-3) (Silicibacter pomeroyi).